The chain runs to 175 residues: MARLQLAGSRRLVPLPRRAPRLAPLLLPLLLALPDGARADCPCKVPALCRPMTHRPDFEVFVFNVGHKTWKYYDWSQITTVVLFLKYDPELMCHAHAKGARVVLKGDVPVKDIINATFRASWIAQQVKLAKTQYMDGINLDIEQDVAHSSPEYYALTALVKETTDSFHHEIKGSQ.

Residues 1 to 38 form the signal peptide; that stretch reads MARLQLAGSRRLVPLPRRAPRLAPLLLPLLLALPDGAR. In terms of domain architecture, GH18 spans 39-175; the sequence is ADCPCKVPAL…SFHHEIKGSQ (137 aa). A glycan (N-linked (GlcNAc...) asparagine) is linked at Asn115. Glu143 (proton donor) is an active-site residue.

This sequence belongs to the glycosyl hydrolase 18 family.

It localises to the lysosome. Involved in the degradation of asparagine-linked glycoproteins. Hydrolyze of N-acetyl-beta-D-glucosamine (1-4)N-acetylglucosamine chitobiose core from the reducing end of the bond, it requires prior cleavage by glycosylasparaginase. This chain is Di-N-acetylchitobiase (CTBS), found in Bos taurus (Bovine).